A 390-amino-acid chain; its full sequence is Chorismate synthase (390 aa).

Arg-39 and Arg-45 together coordinate NADP(+). FMN-binding positions include 132-134, 253-254, Gly-298, 313-317, and Arg-339; these read RSS, NA, and KPIPT.

This sequence belongs to the chorismate synthase family. In terms of assembly, homotetramer. Requires FMNH2 as cofactor.

It catalyses the reaction 5-O-(1-carboxyvinyl)-3-phosphoshikimate = chorismate + phosphate. The protein operates within metabolic intermediate biosynthesis; chorismate biosynthesis; chorismate from D-erythrose 4-phosphate and phosphoenolpyruvate: step 7/7. Catalyzes the anti-1,4-elimination of the C-3 phosphate and the C-6 proR hydrogen from 5-enolpyruvylshikimate-3-phosphate (EPSP) to yield chorismate, which is the branch point compound that serves as the starting substrate for the three terminal pathways of aromatic amino acid biosynthesis. This reaction introduces a second double bond into the aromatic ring system. In Bacillus subtilis (strain 168), this protein is Chorismate synthase.